A 108-amino-acid chain; its full sequence is Ig kappa chain V region BS-5 (108 aa).

The framework-1 stretch occupies residues 1–23; it reads DVVMTQTPASVSEPVGGTVTIKC. Disulfide bonds link Cys-23/Cys-88 and Cys-80/Gly-108. The segment at 24-34 is complementarity-determining-1; it reads QASQSIYSNLA. The segment at 35 to 49 is framework-2; it reads WYQZKPGQPPKLLIY. Residues 50–56 form a complementarity-determining-2 region; that stretch reads KASTLES. The framework-3 stretch occupies residues 57–88; it reads GVPSRFKGSGSGTDFTLTISDLECADAATYFC. The interval 89-97 is complementarity-determining-3; that stretch reads QGSBYTGTV. The segment at 98–107 is framework-4; that stretch reads FGGGTEVVVK.

The chain is Ig kappa chain V region BS-5 from Oryctolagus cuniculus (Rabbit).